The sequence spans 277 residues: Putative pyruvate, phosphate dikinase regulatory protein (277 aa).

ADP is bound at residue 156–163 (GVSRTSKT).

Belongs to the pyruvate, phosphate/water dikinase regulatory protein family. PDRP subfamily.

It catalyses the reaction N(tele)-phospho-L-histidyl/L-threonyl-[pyruvate, phosphate dikinase] + ADP = N(tele)-phospho-L-histidyl/O-phospho-L-threonyl-[pyruvate, phosphate dikinase] + AMP + H(+). The catalysed reaction is N(tele)-phospho-L-histidyl/O-phospho-L-threonyl-[pyruvate, phosphate dikinase] + phosphate + H(+) = N(tele)-phospho-L-histidyl/L-threonyl-[pyruvate, phosphate dikinase] + diphosphate. Functionally, bifunctional serine/threonine kinase and phosphorylase involved in the regulation of the pyruvate, phosphate dikinase (PPDK) by catalyzing its phosphorylation/dephosphorylation. In Carboxydothermus hydrogenoformans (strain ATCC BAA-161 / DSM 6008 / Z-2901), this protein is Putative pyruvate, phosphate dikinase regulatory protein.